The sequence spans 908 residues: Auxin response factor 6 (908 aa).

Residues 1-21 (MKLSPSAGGVSDQPPSPPEVA) form a disordered region. The TF-B3 DNA-binding region spans 134–236 (FCKTLTASDT…QLLLGIRRAN (103 aa)). Residues 525 to 556 (NEQKPQLQPQQQQQESHQQQPQHQQMQQQKHL) form a disordered region. Residues 526-556 (EQKPQLQPQQQQQESHQQQPQHQQMQQQKHL) show a composition bias toward low complexity. Residues 777–861 (ATFVKVYKSG…SCIKILSPQE (85 aa)) enclose the PB1 domain.

Belongs to the ARF family. As to quaternary structure, homodimers and heterodimers.

Its subcellular location is the nucleus. Its function is as follows. Auxin response factors (ARFs) are transcriptional factors that bind specifically to the DNA sequence 5'-TGTCTC-3' found in the auxin-responsive promoter elements (AuxREs). The polypeptide is Auxin response factor 6 (ARF6) (Oryza sativa subsp. indica (Rice)).